Reading from the N-terminus, the 159-residue chain is Probable RNA-binding protein EIF1AD (159 aa).

In terms of domain architecture, S1-like spans Met-18–Thr-93. Residues Lys-109 to Asp-159 are disordered. The segment covering Ser-146–Asp-159 has biased composition (acidic residues).

Belongs to the EIF1AD family.

This is Probable RNA-binding protein EIF1AD from Drosophila melanogaster (Fruit fly).